Reading from the N-terminus, the 302-residue chain is RNA polymerase II holoenzyme cyclin-like subunit (302 aa).

Positions 53–142 (QQLIKLGKRM…VGECEFSLIS (90 aa)) constitute a Cyclin N-terminal domain.

The protein belongs to the cyclin family. Cyclin C subfamily. As to quaternary structure, component of the srb8-11 complex, a regulatory module of the Mediator complex.

It localises to the nucleus. In terms of biological role, component of the srb8-11 complex. The srb8-11 complex is a regulatory module of the Mediator complex which is itself involved in regulation of basal and activated RNA polymerase II-dependent transcription. The srb8-11 complex may be involved in the transcriptional repression of a subset of genes regulated by Mediator. It may inhibit the association of the Mediator complex with RNA polymerase II to form the holoenzyme complex. The srb8-11 complex phosphorylates the C-terminal domain (CTD) of the largest subunit of RNA polymerase II. This is RNA polymerase II holoenzyme cyclin-like subunit (ssn8) from Emericella nidulans (strain FGSC A4 / ATCC 38163 / CBS 112.46 / NRRL 194 / M139) (Aspergillus nidulans).